Consider the following 407-residue polypeptide: Substance-P receptor (407 aa).

Residues 1–31 (MDNVLPVDSDLFPNISTNTSEPNQFVQPAWQ) are Extracellular-facing. N-linked (GlcNAc...) asparagine glycans are attached at residues N14 and N18. Residues 32–54 (IVLWAAAYTVIVVTSVVGNVVVM) form a helical membrane-spanning segment. Over 55-64 (WIILAHKRMR) the chain is Cytoplasmic. A helical membrane pass occupies residues 65-86 (TVTNYFLVNLAFAEASMAAFNT). Over 87–106 (VVNFTYAVHNEWYYGLFYCK) the chain is Extracellular. C105 and C180 are disulfide-bonded. A helical transmembrane segment spans residues 107 to 128 (FHNFFPIAAVFASIYSMTAVAF). The Cytoplasmic portion of the chain corresponds to 129 to 148 (DRYMAIIHPLQPRLSATATK). Residues 149–169 (VVICVIWVLALLLAFPQGYYS) traverse the membrane as a helical segment. The Extracellular segment spans residues 170 to 194 (TTETMPGRVVCMIEWPSHPDKIYEK). A helical transmembrane segment spans residues 195-219 (VYHICVTVLIYFLPLLVIGYAYTVV). The Cytoplasmic segment spans residues 220-248 (GITLWASEIPGDSSDRYHEQVSAKRKVVK). The chain crosses the membrane as a helical span at residues 249–270 (MMIVVVCTFAICWLPFHIFFLL). Residues 271–283 (PYINPDLYLKKFI) are Extracellular-facing. Residues 284-308 (QQVYLAIMWLAMSSTMYNPIIYCCL) form a helical membrane-spanning segment. At 309 to 407 (NDRFRLGFKH…SSSFYSNMLS (99 aa)) the chain is on the cytoplasmic side. Residue C322 is the site of S-palmitoyl cysteine attachment. A disordered region spans residues 363-407 (GAHEEDPEEGPKATPSSLDLTSNGSSRSNSKTVTESSSFYSNMLS). A compositionally biased stretch (polar residues) spans 376 to 407 (TPSSLDLTSNGSSRSNSKTVTESSSFYSNMLS).

Belongs to the G-protein coupled receptor 1 family. As to quaternary structure, interacts with ARRB1.

It is found in the cell membrane. Functionally, this is a receptor for the tachykinin neuropeptide substance P. It is probably associated with G proteins that activate a phosphatidylinositol-calcium second messenger system. The rank order of affinity of this receptor to tachykinins is: substance P &gt; substance K &gt; neuromedin-K. The polypeptide is Substance-P receptor (TACR1) (Cavia porcellus (Guinea pig)).